The primary structure comprises 384 residues: Cytochrome b (384 aa).

The next 4 membrane-spanning stretches (helical) occupy residues Leu32–Met52, Trp76–Gly98, Val113–Cys133, and Phe179–Met199. 2 residues coordinate heme b: His82 and His96. 2 residues coordinate heme b: His183 and His197. An a ubiquinone-binding site is contributed by His202. Helical transmembrane passes span Phe225–Phe245, Leu289–Asp309, Leu321–Glu341, and Phe348–Pro368.

Belongs to the cytochrome b family. As to quaternary structure, fungal cytochrome b-c1 complex contains 10 subunits; 3 respiratory subunits, 2 core proteins and 5 low-molecular weight proteins. Cytochrome b-c1 complex is a homodimer. Requires heme b as cofactor.

It is found in the mitochondrion inner membrane. Its function is as follows. Component of the ubiquinol-cytochrome c reductase complex (complex III or cytochrome b-c1 complex) that is part of the mitochondrial respiratory chain. The b-c1 complex mediates electron transfer from ubiquinol to cytochrome c. Contributes to the generation of a proton gradient across the mitochondrial membrane that is then used for ATP synthesis. The chain is Cytochrome b (COB) from Eremothecium gossypii (strain ATCC 10895 / CBS 109.51 / FGSC 9923 / NRRL Y-1056) (Yeast).